A 522-amino-acid chain; its full sequence is Tetratricopeptide repeat and J domain-containing co-chaperone DNJ1 (522 aa).

A signal peptide spans 1-22; sequence MKGFLLVALPVLFLSLSTQVFG. TPR repeat units follow at residues 29–62, 63–96, 97–130, 142–175, 210–243, 256–289, and 356–389; these read AAQIVQNANRLLAEGSYSAAARAYGEAIELDPTG, YANYYKRATAYLSMGRHNAALDDFEQILRINPGF, VQAHYQRAKILAKEGDFAKAQYELKAYVRTKSDS, GEAAEKSALQAFEKGKWQVCVEHSTKALEVGPNS, TYLPLQLSNIAYFIRASSQAAAHIKQCLHFDPDS, LEKDAARVRNFIESGTYRQAIKILDGDDGLLVRF, and VDSWISRGERLLRVEKWEEAMRAVEKAFELSGRS. Residues 410–471 form the J domain; sequence DYYKVLGVPR…ELRQRYDNGD (62 aa). Residues 465 to 494 are disordered; that stretch reads QRYDNGDDPNDPTGGQQHNPFAHHGGGMPF.

The protein resides in the endoplasmic reticulum lumen. Endoplasmic reticulum co-chaperone crucial for survival and virulence factor production at elevated temperatures representative of febrile patients during infection. Contributes to virulence in a mouse model of cryptococcosis. With chaperone CNE1, coordinately maintains ER homeostasis and contributes to maintenance of cell wall architecture. This is Tetratricopeptide repeat and J domain-containing co-chaperone DNJ1 from Cryptococcus neoformans var. grubii serotype A (strain H99 / ATCC 208821 / CBS 10515 / FGSC 9487) (Filobasidiella neoformans var. grubii).